The sequence spans 108 residues: uncharacterized protein (108 aa).

Residues 1–16 (MKKLILIAIMASGLVA) form the signal peptide. Cys17 carries the N-palmitoyl cysteine lipid modification. Cys17 carries the S-diacylglycerol cysteine lipid modification.

The protein resides in the cell membrane. This is an uncharacterized protein from Escherichia coli (strain K12).